A 296-amino-acid polypeptide reads, in one-letter code: tRNA dimethylallyltransferase (296 aa).

11-18 (GPTAVGKT) contributes to the ATP binding site. 13–18 (TAVGKT) contacts substrate. The tract at residues 36-39 (DSQQ) is interaction with substrate tRNA.

It belongs to the IPP transferase family. As to quaternary structure, monomer. Mg(2+) serves as cofactor.

It catalyses the reaction adenosine(37) in tRNA + dimethylallyl diphosphate = N(6)-dimethylallyladenosine(37) in tRNA + diphosphate. Its function is as follows. Catalyzes the transfer of a dimethylallyl group onto the adenine at position 37 in tRNAs that read codons beginning with uridine, leading to the formation of N6-(dimethylallyl)adenosine (i(6)A). This is tRNA dimethylallyltransferase from Streptococcus agalactiae serotype Ia (strain ATCC 27591 / A909 / CDC SS700).